Here is a 129-residue protein sequence, read N- to C-terminus: uncharacterized protein (129 aa).

A run of 3 helical transmembrane segments spans residues isoleucine 15–phenylalanine 35, isoleucine 48–phenylalanine 68, and isoleucine 107–cysteine 127.

Its subcellular location is the membrane. This is an uncharacterized protein from Saccharomyces cerevisiae (strain ATCC 204508 / S288c) (Baker's yeast).